We begin with the raw amino-acid sequence, 438 residues long: Enolase (438 aa).

Substrate is bound by residues H159 and E168. E211 functions as the Proton donor in the catalytic mechanism. Mg(2+)-binding residues include D246, E297, and D322. Substrate contacts are provided by E297 and D322. K347 acts as the Proton acceptor in catalysis. Substrate is bound by residues 374–377 (SHRS) and K398.

The protein belongs to the enolase family. Homodimer. The cofactor is Mg(2+).

The protein resides in the cytoplasm. It carries out the reaction (2R)-2-phosphoglycerate = phosphoenolpyruvate + H2O. The protein operates within carbohydrate degradation; glycolysis; pyruvate from D-glyceraldehyde 3-phosphate: step 4/5. This Penicillium chrysogenum (Penicillium notatum) protein is Enolase (enoA).